The sequence spans 217 residues: MKLTIATVLASILLIGFANVANCSDCGCPTKATTTCAPPTKPTCKSTSTTTTTTTTTTTTTTTTRAPPTKPTCKSTSTTTTTTRAPPTKPTCKSTSTTTTTTRAPPTTTCKTSTTTTTTHKPTTHSTPKTKPTKHTTPKTKPTKHTTPKTKPTKHTTPTTTTTTTPKPCGCKSCGPGGEPCKGCGKRSALCQDLNGLLRNLERQVRQCVCGQPDWLL.

Residues 1–23 (MKLTIATVLASILLIGFANVANC) form the signal peptide. A compositionally biased stretch (low complexity) spans 45–130 (KSTSTTTTTT…KPTTHSTPKT (86 aa)). The segment at 45–163 (KSTSTTTTTT…KHTTPTTTTT (119 aa)) is disordered. Basic residues predominate over residues 131-154 (KPTKHTTPKTKPTKHTTPKTKPTK).

The sequence is that of Salivary glue protein Sgs-3 (Sgs3) from Drosophila simulans (Fruit fly).